The chain runs to 406 residues: Zinc finger protein 57 (406 aa).

The KRAB domain maps to 17–88 (VRYEDVAVSF…TCTGVFKGGP (72 aa)). Residues 57 to 77 (ESKKKPQEPNPNLKDKDDDKS) form a disordered region. The segment at 90–113 (FFCLTCGKCFKKNTFLFNHQFPVR) adopts a C2H2-type 1; degenerate zinc-finger fold. 2 consecutive C2H2-type zinc fingers follow at residues 140–162 (FFCN…RRAH) and 168–190 (RSCP…LKVH). Residues 194-226 (KPVAGSHVKVHQNKPVASNQKQKGRVPPTTRES) are disordered. The C2H2-type 4 zinc-finger motif lies at 270-292 (VYCPYCRITFTMRTCLLNHLKIH). Residues 318 to 337 (YNCPVCDSSFRGKESLLNHL) form a C2H2-type 5; degenerate zinc finger. The segment at 372-406 (SRKRRRKRISSDSSETEGPSGSDEVMEVDTDSDLS) is disordered. Positions 395-406 (EVMEVDTDSDLS) are enriched in acidic residues.

It belongs to the krueppel C2H2-type zinc-finger protein family. Expressed in oligodendrocytes and at lower levels in astrocytes.

It is found in the nucleus. In terms of biological role, transcription regulator required to maintain maternal and paternal gene imprinting, a process by which gene expression is restricted in a parent of origin-specific manner by epigenetic modification of genomic DNA and chromatin, including DNA methylation. Acts by controlling DNA methylation during the earliest multicellular stages of development at multiple imprinting control regions (ICRs). Acts together with ZNF445. Required for the establishment of maternal methylation imprints at SNRPN locus. Acts as a transcriptional repressor in Schwann cells. Binds to a 5'-TGCCGC-3' consensus sequence and recognizes the methylated CpG within this element. This chain is Zinc finger protein 57 (Zfp57), found in Rattus norvegicus (Rat).